The following is a 370-amino-acid chain: Histidinol-phosphate aminotransferase (370 aa).

Lys223 is modified (N6-(pyridoxal phosphate)lysine).

The protein belongs to the class-II pyridoxal-phosphate-dependent aminotransferase family. Histidinol-phosphate aminotransferase subfamily. As to quaternary structure, homodimer. Pyridoxal 5'-phosphate is required as a cofactor.

The enzyme catalyses L-histidinol phosphate + 2-oxoglutarate = 3-(imidazol-4-yl)-2-oxopropyl phosphate + L-glutamate. Its pathway is amino-acid biosynthesis; L-histidine biosynthesis; L-histidine from 5-phospho-alpha-D-ribose 1-diphosphate: step 7/9. The polypeptide is Histidinol-phosphate aminotransferase (Methylobacterium sp. (strain 4-46)).